We begin with the raw amino-acid sequence, 411 residues long: MKGALGSPVAAAGAAMQETFGCVVANRFHQLLDDESDPFDILREAEHRRQQQLQRKRRDEAAAASGAGHRGGRSPAVASGHRPGAGGRRESQKERKSLAASGAQQPDSPGGPQPPGQKRTPRRGEQQGWNDNRGTDVVLERAERRSYREYRPYETERQADLPVEKFTDEKPVDRFDRDRPLRGRGGPRGGLRSRGRGGPGNRAFDSFDQRGKRDFERYSSNDKTNRMEDSMGGCGIRPWGSGKDTSDTEPPAPMEETSMMEECQGTLDEESAAKVPELEVEEENQVQEMTLDEWKNLQEQTRPKPEFNIRKPESTVPSKAVVIHKSRYRDDMVKEDYEDESHVFRKAANDITSQLEINFGNLPRPGRGARGSTRGGRGRMRRTENYGPRAEVVTQDVAPNPDDPEDFPALA.

Phosphoserine is present on residues S7 and S36. Positions 42–62 form a coiled coil; it reads LREAEHRRQQQLQRKRRDEAA. Residues 42 to 271 are disordered; sequence LREAEHRRQQ…ECQGTLDEES (230 aa). At R70 the chain carries Omega-N-methylarginine. The residue at position 74 (S74) is a Phosphoserine. Residues 87-97 are compositionally biased toward basic and acidic residues; that stretch reads GRRESQKERKS. S108 bears the Phosphoserine mark. 2 stretches are compositionally biased toward basic and acidic residues: residues 138–181 and 205–229; these read VLER…DRPL and DSFD…RMED. Glycyl lysine isopeptide (Lys-Gly) (interchain with G-Cter in SUMO1); alternate cross-links involve residues K212 and K274. Residues K212 and K274 each participate in a glycyl lysine isopeptide (Lys-Gly) (interchain with G-Cter in SUMO2); alternate cross-link. Residues 279-301 are a coiled coil; the sequence is EVEEENQVQEMTLDEWKNLQEQT. Residues 296-313 show a composition bias toward basic and acidic residues; that stretch reads NLQEQTRPKPEFNIRKPE. Residues 296–318 form a disordered region; sequence NLQEQTRPKPEFNIRKPESTVPS. A Glycyl lysine isopeptide (Lys-Gly) (interchain with G-Cter in SUMO1); alternate cross-link involves residue K334. K334 participates in a covalent cross-link: Glycyl lysine isopeptide (Lys-Gly) (interchain with G-Cter in SUMO2); alternate. Residues T352 and T373 each carry the phosphothreonine; by PKC modification. A disordered region spans residues 358–411; the sequence is NFGNLPRPGRGARGSTRGGRGRMRRTENYGPRAEVVTQDVAPNPDDPEDFPALA. Positions 402-411 are enriched in acidic residues; that stretch reads DDPEDFPALA.

Belongs to the SERBP1-HABP4 family. As to quaternary structure, associates with ribosomes; promoting ribosome stabilization. Interacts with EEF2/eEF2; promoting ribosome stabilization. Interacts with FMR1. Interacts with FXR1 and FXR2. Interacts with CHD3 (via C-terminus). Interacts (via C-terminus) with RACK1. Interacts with p53/TP53. Interacts (via N-terminus) with SRSF9; this interaction is direct. Interacts with SYNCRIP; this interaction is direct. Interacts with MEF2C (via N-terminus); this interaction decreases DNA-binding activity of MEF2C in myocardial cells in response to mechanical stress. Interacts with PRMT1 (via N-terminus). Interacts with SPIN1. Phosphorylated by phorbol 12-myristate 13-acetate (PMA)-activated PKC isoforms at Thr-352 and Thr-373. Post-translationally, methylated. Methylation is decreased by phorbol 12-myristate 13-acetate (PMA)-activated PKC, in vitro. Expressed in adult heart, brain, liver, kidney, testis, and in various embryonic tissues, but not in adult spleen, lung or skeletal muscle.

Its subcellular location is the nucleus. The protein localises to the cytoplasm. The protein resides in the stress granule. It localises to the sarcoplasm. It is found in the nuclear body. Its subcellular location is the nucleolus. The protein localises to the nucleus speckle. The protein resides in the cajal body. It localises to the gem. In terms of biological role, ribosome-binding protein that promotes ribosome hibernation, a process during which ribosomes are stabilized in an inactive state and preserved from proteasomal degradation. Acts via its association with EEF2/eEF2 factor at the A-site of the ribosome, promoting ribosome stabilization in an inactive state compatible with storage. Plays a key role in ribosome hibernation in the mature oocyte by promoting ribosome stabilization. Ribosomes, which are produced in large quantities during oogenesis, are stored and translationally repressed in the oocyte and early embryo. Also binds RNA, regulating transcription and pre-mRNA splicing. Binds (via C-terminus) to poly(U) RNA. Seems to play a role in PML-nuclear bodies formation. Negatively regulates DNA-binding activity of the transcription factor MEF2C in myocardial cells in response to mechanical stress. The polypeptide is Intracellular hyaluronan-binding protein 4 (Mus musculus (Mouse)).